The following is a 566-amino-acid chain: Type 2 DNA topoisomerase 6 subunit B (566 aa).

Residues Asn-48, Asp-80, 101-102, 111-118, and Lys-475 contribute to the ATP site; these read TK and GQQGIGIS.

It belongs to the TOP6B family. As to quaternary structure, homodimer. Heterotetramer of two Top6A and two Top6B chains.

It carries out the reaction ATP-dependent breakage, passage and rejoining of double-stranded DNA.. Relaxes both positive and negative superturns and exhibits a strong decatenase activity. This chain is Type 2 DNA topoisomerase 6 subunit B, found in Thermococcus sibiricus (strain DSM 12597 / MM 739).